A 318-amino-acid polypeptide reads, in one-letter code: Deacetoxycephalosporin C hydroxylase (318 aa).

A Fe2OG dioxygenase domain is found at 158-271 (DADPVLRLRY…RTSSVFFLRP (114 aa)).

The protein belongs to the iron/ascorbate-dependent oxidoreductase family. As to quaternary structure, monomer. It depends on Fe cation as a cofactor.

The catalysed reaction is deacetoxycephalosporin C + 2-oxoglutarate + O2 = deacetylcephalosporin C + succinate + CO2. Its pathway is antibiotic biosynthesis; cephalosporin C biosynthesis. Hydroxylation of desacetoxicephalosporin C in 3'position to form deacetylcephalosporin C. The sequence is that of Deacetoxycephalosporin C hydroxylase (cefF) from Streptomyces clavuligerus.